Here is a 281-residue protein sequence, read N- to C-terminus: NADPH-dependent 7-cyano-7-deazaguanine reductase (281 aa).

88–90 (VES) contributes to the substrate binding site. NADPH is bound at residue 90-91 (SK). C189 acts as the Thioimide intermediate in catalysis. D196 functions as the Proton donor in the catalytic mechanism. 228-229 (HE) is a substrate binding site. Residue 257–258 (RG) participates in NADPH binding.

It belongs to the GTP cyclohydrolase I family. QueF type 2 subfamily. As to quaternary structure, homodimer.

The protein resides in the cytoplasm. The catalysed reaction is 7-aminomethyl-7-carbaguanine + 2 NADP(+) = 7-cyano-7-deazaguanine + 2 NADPH + 3 H(+). It participates in tRNA modification; tRNA-queuosine biosynthesis. Functionally, catalyzes the NADPH-dependent reduction of 7-cyano-7-deazaguanine (preQ0) to 7-aminomethyl-7-deazaguanine (preQ1). In Cronobacter sakazakii (strain ATCC BAA-894) (Enterobacter sakazakii), this protein is NADPH-dependent 7-cyano-7-deazaguanine reductase.